The sequence spans 483 residues: Galactose-3-O-sulfotransferase 4 (483 aa).

Over 1-18 (MGVLSPTRTMRLWGPRSL) the chain is Cytoplasmic. A helical; Signal-anchor for type II membrane protein membrane pass occupies residues 19–39 (GVALGVFMTIGFALQLLGGPF). The Lumenal segment spans residues 40–483 (QRRLPGLQLR…PLKTSRRPSP (444 aa)). The interval 225–248 (KRGNPHVSRDPNPPQLPSGAGPPA) is disordered. The N-linked (GlcNAc...) asparagine glycan is linked to Asn371.

It belongs to the galactose-3-O-sulfotransferase family. Mn(2+) serves as cofactor.

It is found in the golgi apparatus. The protein resides in the golgi stack membrane. The protein operates within protein modification; carbohydrate sulfation. Functionally, catalyzes the transfer of sulfate to beta-1,3-linked galactose residues in O-linked glycoproteins. Good substrates include asialofetuin, Gal-beta-1,3-GalNAc and Gal-beta-1,3 (GlcNAc-beta-1,6)GalNAc. In Bos taurus (Bovine), this protein is Galactose-3-O-sulfotransferase 4 (GAL3ST4).